The primary structure comprises 374 residues: Cobalt-precorrin-5B C(1)-methyltransferase (374 aa).

It belongs to the CbiD family.

It catalyses the reaction Co-precorrin-5B + S-adenosyl-L-methionine = Co-precorrin-6A + S-adenosyl-L-homocysteine. It functions in the pathway cofactor biosynthesis; adenosylcobalamin biosynthesis; cob(II)yrinate a,c-diamide from sirohydrochlorin (anaerobic route): step 6/10. Functionally, catalyzes the methylation of C-1 in cobalt-precorrin-5B to form cobalt-precorrin-6A. In Synechococcus elongatus (strain ATCC 33912 / PCC 7942 / FACHB-805) (Anacystis nidulans R2), this protein is Cobalt-precorrin-5B C(1)-methyltransferase.